We begin with the raw amino-acid sequence, 184 residues long: MPNTQSPYIAFAMLLSSNGHPVTPAELHGLLIGRSCAGAGFDADAWLADAAQLLETEPGDTVRNALIGLQEMVKGELNSDDMAIVLLLPSDDAALSDRATALGQWCQGFITGFGLNAGGKDLSDEAKDVLQDLVAISQVQEALEESEDGESDYMEVMEYLRVAPLLLFSELAKPAAPAPKPSLH.

Belongs to the UPF0149 family.

The sequence is that of UPF0149 protein PputGB1_5261 from Pseudomonas putida (strain GB-1).